The sequence spans 437 residues: Proline--tRNA ligase (437 aa).

It belongs to the class-II aminoacyl-tRNA synthetase family. ProS type 2 subfamily. Homodimer.

Its subcellular location is the cytoplasm. It carries out the reaction tRNA(Pro) + L-proline + ATP = L-prolyl-tRNA(Pro) + AMP + diphosphate. Catalyzes the attachment of proline to tRNA(Pro) in a two-step reaction: proline is first activated by ATP to form Pro-AMP and then transferred to the acceptor end of tRNA(Pro). The chain is Proline--tRNA ligase from Acidiphilium cryptum (strain JF-5).